A 351-amino-acid polypeptide reads, in one-letter code: Meiotically up-regulated gene 1 protein (351 aa).

The protein resides in the cytoplasm. Functionally, required for correct meiotic chromosome segregation. In Schizosaccharomyces pombe (strain 972 / ATCC 24843) (Fission yeast), this protein is Meiotically up-regulated gene 1 protein (mug1).